The chain runs to 198 residues: tRNA (pseudouridine(54)-N(1))-methyltransferase (198 aa).

S-adenosyl-L-methionine-binding positions include Leu130, Gly153, 176–181, and Cys186; that span reads LSPLEL.

The protein belongs to the methyltransferase superfamily. TrmY family. Homodimer.

Its subcellular location is the cytoplasm. It catalyses the reaction pseudouridine(54) in tRNA + S-adenosyl-L-methionine = N(1)-methylpseudouridine(54) in tRNA + S-adenosyl-L-homocysteine + H(+). Functionally, specifically catalyzes the N1-methylation of pseudouridine at position 54 (Psi54) in tRNAs. This is tRNA (pseudouridine(54)-N(1))-methyltransferase from Methanococcus maripaludis (strain C7 / ATCC BAA-1331).